Reading from the N-terminus, the 205-residue chain is UPF0548 protein At2g17695 (205 aa).

Belongs to the UPF0548 family.

The polypeptide is UPF0548 protein At2g17695 (Arabidopsis thaliana (Mouse-ear cress)).